The chain runs to 1174 residues: Carboxylic acid reductase (1174 aa).

Residues His-297, Ser-392, Glu-413–Gly-414, Thr-418, Asp-491, Tyr-503–Arg-506, Lys-512, and Lys-612 each bind AMP. The region spanning Ala-651–Arg-726 is the Carrier domain. At Ser-685 the chain carries O-(pantetheine 4'-phosphoryl)serine. NADP(+) is bound by residues Thr-787–Gly-791, Arg-814, Arg-824, Asp-854–Lys-855, Pro-880–Ala-882, Thr-919–Ser-920, Tyr-956, and Lys-960.

It belongs to the ATP-dependent AMP-binding enzyme family. Carboxylic acid reductase subfamily. Pantetheine 4'-phosphate serves as cofactor.

The catalysed reaction is a carboxylate + ATP + NADPH + H(+) = an aldehyde + AMP + diphosphate + NADP(+). Catalyzes the ATP- and NADPH-dependent reduction of carboxylic acids to the corresponding aldehydes. Catalyzes the reduction of a wide range of aliphatic fatty acids (C6-C18) into their corresponding aldehydes. Can also reduce benzoate to benzaldehyde. Has a preference for NADPH over NADH as the electron donor. The polypeptide is Carboxylic acid reductase (Mycobacterium marinum (strain ATCC BAA-535 / M)).